Reading from the N-terminus, the 193-residue chain is Acyl carrier protein phosphodiesterase (193 aa).

It belongs to the AcpH family.

The catalysed reaction is holo-[ACP] + H2O = apo-[ACP] + (R)-4'-phosphopantetheine + H(+). Functionally, converts holo-ACP to apo-ACP by hydrolytic cleavage of the phosphopantetheine prosthetic group from ACP. In Escherichia coli O6:H1 (strain CFT073 / ATCC 700928 / UPEC), this protein is Acyl carrier protein phosphodiesterase.